The following is a 203-amino-acid chain: Protein-methionine-sulfoxide reductase heme-binding subunit MsrQ (203 aa).

Helical transmembrane passes span 10–30 (IFVV…MSLL), 42–62 (LGLG…LQKL), 75–95 (LGLW…FFIL), 110–130 (PYII…ITSN), 147–167 (LVYA…RSDL), and 169–189 (EWSI…PAVA).

It belongs to the MsrQ family. As to quaternary structure, heterodimer of a catalytic subunit (MsrP) and a heme-binding subunit (MsrQ). Requires FMN as cofactor. Heme b serves as cofactor.

Its subcellular location is the cell inner membrane. In terms of biological role, part of the MsrPQ system that repairs oxidized periplasmic proteins containing methionine sulfoxide residues (Met-O), using respiratory chain electrons. Thus protects these proteins from oxidative-stress damage caused by reactive species of oxygen and chlorine generated by the host defense mechanisms. MsrPQ is essential for the maintenance of envelope integrity under bleach stress, rescuing a wide series of structurally unrelated periplasmic proteins from methionine oxidation. MsrQ provides electrons for reduction to the reductase catalytic subunit MsrP, using the quinone pool of the respiratory chain. This is Protein-methionine-sulfoxide reductase heme-binding subunit MsrQ from Pseudomonas putida (strain GB-1).